The following is a 270-amino-acid chain: Dihydroorotate dehydrogenase B (NAD(+)), catalytic subunit (270 aa).

Residues S12 and 35–36 (KT) contribute to the FMN site. Substrate is bound by residues K35, 59 to 63 (NRIGL), and N114. N114 contacts FMN. C117 acts as the Nucleophile in catalysis. FMN contacts are provided by K153 and V179. 180-181 (NT) contacts substrate. Residues G199, 226-227 (GG), and 248-249 (GS) contribute to the FMN site.

Belongs to the dihydroorotate dehydrogenase family. Type 1 subfamily. Heterotetramer of 2 PyrK and 2 PyrD type B subunits. FMN serves as cofactor.

It localises to the cytoplasm. The catalysed reaction is (S)-dihydroorotate + NAD(+) = orotate + NADH + H(+). It participates in pyrimidine metabolism; UMP biosynthesis via de novo pathway; orotate from (S)-dihydroorotate (NAD(+) route): step 1/1. In terms of biological role, catalyzes the conversion of dihydroorotate to orotate with NAD(+) as electron acceptor. The polypeptide is Dihydroorotate dehydrogenase B (NAD(+)), catalytic subunit (pyrD) (Thermotoga maritima (strain ATCC 43589 / DSM 3109 / JCM 10099 / NBRC 100826 / MSB8)).